A 140-amino-acid chain; its full sequence is Putative nickel-responsive regulator 3 (140 aa).

Ni(2+)-binding residues include His81, His92, His94, and Cys100.

This sequence belongs to the transcriptional regulatory CopG/NikR family. The cofactor is Ni(2+).

In terms of biological role, transcriptional regulator. The polypeptide is Putative nickel-responsive regulator 3 (Methanosarcina acetivorans (strain ATCC 35395 / DSM 2834 / JCM 12185 / C2A)).